A 355-amino-acid chain; its full sequence is Adenine deaminase (355 aa).

3 residues coordinate Zn(2+): H23, H25, and H211. The active-site Proton donor is E214. D292 contributes to the Zn(2+) binding site. D293 is a binding site for substrate.

Belongs to the metallo-dependent hydrolases superfamily. Adenosine and AMP deaminases family. Adenine deaminase type 2 subfamily. Zn(2+) serves as cofactor.

Its subcellular location is the cytoplasm. The protein resides in the nucleus. It carries out the reaction adenine + H2O + H(+) = hypoxanthine + NH4(+). Catalyzes the hydrolytic deamination of adenine to hypoxanthine. Plays an important role in the purine salvage pathway and in nitrogen catabolism. This Kluyveromyces lactis (strain ATCC 8585 / CBS 2359 / DSM 70799 / NBRC 1267 / NRRL Y-1140 / WM37) (Yeast) protein is Adenine deaminase.